Consider the following 50-residue polypeptide: Inter-alpha-trypsin inhibitor heavy chain H2 (50 aa).

Belongs to the ITIH family. I-alpha-I plasma protease inhibitors are assembled from one or two heavy chains (HC) and one light chain, bikunin. Inter-alpha-inhibitor (I-alpha-I) is composed of ITIH1/HC1, ITIH2/HC2 and bikunin. In terms of processing, phosphorylated by FAM20C in the extracellular medium.

Its subcellular location is the secreted. In terms of biological role, may act as a carrier of hyaluronan in serum or as a binding protein between hyaluronan and other matrix protein, including those on cell surfaces in tissues to regulate the localization, synthesis and degradation of hyaluronan which are essential to cells undergoing biological processes. This chain is Inter-alpha-trypsin inhibitor heavy chain H2 (ITIH2), found in Bos taurus (Bovine).